A 731-amino-acid chain; its full sequence is 1,4-alpha-glucan branching enzyme GlgB (731 aa).

Residue Asp411 is the Nucleophile of the active site. Glu464 serves as the catalytic Proton donor.

Belongs to the glycosyl hydrolase 13 family. GlgB subfamily. Monomer.

It carries out the reaction Transfers a segment of a (1-&gt;4)-alpha-D-glucan chain to a primary hydroxy group in a similar glucan chain.. Its pathway is glycan biosynthesis; glycogen biosynthesis. In terms of biological role, catalyzes the formation of the alpha-1,6-glucosidic linkages in glycogen by scission of a 1,4-alpha-linked oligosaccharide from growing alpha-1,4-glucan chains and the subsequent attachment of the oligosaccharide to the alpha-1,6 position. This Mycolicibacterium paratuberculosis (strain ATCC BAA-968 / K-10) (Mycobacterium paratuberculosis) protein is 1,4-alpha-glucan branching enzyme GlgB.